A 282-amino-acid polypeptide reads, in one-letter code: NADPH-dependent 7-cyano-7-deazaguanine reductase (282 aa).

88 to 90 (IES) contacts substrate. Residue 90 to 91 (SK) participates in NADPH binding. Residue Cys190 is the Thioimide intermediate of the active site. The active-site Proton donor is the Asp197. 229–230 (HE) contributes to the substrate binding site. NADPH is bound at residue 258 to 259 (RG).

The protein belongs to the GTP cyclohydrolase I family. QueF type 2 subfamily. As to quaternary structure, homodimer.

It localises to the cytoplasm. The catalysed reaction is 7-aminomethyl-7-carbaguanine + 2 NADP(+) = 7-cyano-7-deazaguanine + 2 NADPH + 3 H(+). It functions in the pathway tRNA modification; tRNA-queuosine biosynthesis. Catalyzes the NADPH-dependent reduction of 7-cyano-7-deazaguanine (preQ0) to 7-aminomethyl-7-deazaguanine (preQ1). This Pectobacterium carotovorum subsp. carotovorum (strain PC1) protein is NADPH-dependent 7-cyano-7-deazaguanine reductase.